Reading from the N-terminus, the 229-residue chain is Potassium/proton antiporter CemA (229 aa).

3 helical membrane passes run 7-27 (FTPL…SFSF), 114-134 (LICF…LVIL), and 189-209 (ILSG…KYWI).

Belongs to the CemA family.

The protein resides in the plastid. It localises to the chloroplast inner membrane. It carries out the reaction K(+)(in) + H(+)(out) = K(+)(out) + H(+)(in). In terms of biological role, contributes to K(+)/H(+) antiport activity by supporting proton efflux to control proton extrusion and homeostasis in chloroplasts in a light-dependent manner to modulate photosynthesis. Prevents excessive induction of non-photochemical quenching (NPQ) under continuous-light conditions. Indirectly promotes efficient inorganic carbon uptake into chloroplasts. The protein is Potassium/proton antiporter CemA of Ipomoea purpurea (Common morning glory).